The sequence spans 254 residues: MSTQPAPPPEAPSNLLHVQFKNPEFLSYLSHLQSTGQVSLGRDSSCAKFDPAHPLTEHNVMAYFATSPFFDRRSNNEQIRMQNIANGIQNLSGGMGAKQEEQELKRFTGLEFVLVHSREPTCFVVQKRWRTSPTETTPLAAYYVINDSIYQAPDLYSILATRLQSTVYALRMSLSTQRRARPSFDPRRGHHGRFIVADAPTSIDADSNRTCTTQSTHTHHADDHTPQLEHQQDHIHPPPPAAFTQPQLKKARFD.

The segment covering Ala-205 to Thr-216 has biased composition (polar residues). The disordered stretch occupies residues Ala-205 to Asp-254. A compositionally biased stretch (basic and acidic residues) spans His-219–His-236.

This sequence belongs to the Mediator complex subunit 6 family. In terms of assembly, component of the Mediator complex.

It localises to the nucleus. Component of the Mediator complex, a coactivator involved in the regulated transcription of nearly all RNA polymerase II-dependent genes. Mediator functions as a bridge to convey information from gene-specific regulatory proteins to the basal RNA polymerase II transcription machinery. Mediator is recruited to promoters by direct interactions with regulatory proteins and serves as a scaffold for the assembly of a functional preinitiation complex with RNA polymerase II and the general transcription factors. The polypeptide is Mediator of RNA polymerase II transcription subunit 6 (MED6) (Mycosarcoma maydis (Corn smut fungus)).